The sequence spans 222 residues: Large ribosomal subunit protein bL25 (222 aa).

It belongs to the bacterial ribosomal protein bL25 family. CTC subfamily. Part of the 50S ribosomal subunit; part of the 5S rRNA/L5/L18/L25 subcomplex. Contacts the 5S rRNA. Binds to the 5S rRNA independently of L5 and L18.

This is one of the proteins that binds to the 5S RNA in the ribosome where it forms part of the central protuberance. The protein is Large ribosomal subunit protein bL25 of Ruthia magnifica subsp. Calyptogena magnifica.